A 711-amino-acid polypeptide reads, in one-letter code: MNKGWLELESDPGLFTLLVEDFGVKGVQVEEIYDLQSKCQGPVYGFIFLFKWIEERRSRRKVSTLVDDTSVIDDDIVNNMFFAHQLIPNSCATHALLSVLLNCSNVDLGPTLSRMKDFTKGFSPESKGYAIGNAPELAKAHNSHARPEPRHLPEKQNGLSAVRTMEAFHFVSYVPITGRLFELDGLKVYPIDHGPWGEDEEWTDKARRVIMERIGLATAGIKYEARLHVLKVNRQTVLEALQQLIRVTQPELIQTHKSQESQLPEESKPASSKSPLALETSRAPVASESTHTDGVEEVAGSCPQAPTHSPPSKPKLVVKPPGSNINGVPPNPTPIVQRLPAFLDNHNYAKSPMQEEEDLAAGVGRSRVPVRPPQQYSDDEDDYEDEEEDDAQSTSSAIRYKRKGPGKPGPLSSSGDGQLSVLQPNTINVLAEKLKESQKDLSIPLSIKTSSGAGSPAVAVPTHSQPSPTPSNESTDTASEIGSAFNSPLRSPIRSANPTRPSSPVTSHISKVLFGEDDSLLRVDCIRYNRAVRDLGPVISTGLLHLAEDGVLSPLALTESGKGSSPSIRPSQGSQGSGSPEEKEVVEAVDSREKPGLVRPSESLNGEKYSPKELLALLKCVEAEIANYEACLKEEVEKRKKFKIDDQRRTHNYDEFICTFISMLAQEGMLANLVEQNISVRRRQGVSIGRLHKQRKPDRRKRSRPYKAKRQ.

Residues 4–234 (GWLELESDPG…ARLHVLKVNR (231 aa)) enclose the UCH catalytic domain. The short motif at 56-60 (RRSRR) is the Arg-finger motif element. Cys91 (nucleophile) is an active-site residue. His169 (proton donor) is an active-site residue. The tract at residues 255 to 337 (THKSQESQLP…VPPNPTPIVQ (83 aa)) is disordered. Residues 269 to 278 (PASSKSPLAL) show a composition bias toward low complexity. Ser274 carries the post-translational modification Phosphoserine. Positions 345 to 348 (NHNY) match the HBM-like motif motif. Phosphoserine occurs at positions 351 and 377. Disordered regions lie at residues 354–420 (QEEE…GQLS) and 446–506 (SIKT…SPVT). Positions 377–391 (SDDEDDYEDEEEDDA) are enriched in acidic residues. A compositionally biased stretch (polar residues) spans 462–506 (THSQPSPTPSNESTDTASEIGSAFNSPLRSPIRSANPTRPSSPVT). Residue Thr475 is modified to Phosphothreonine. Phosphoserine is present on residues Ser503, Ser519, Ser567, and Ser579. A disordered region spans residues 557–605 (LTESGKGSSPSIRPSQGSQGSGSPEEKEVVEAVDSREKPGLVRPSESLN). A compositionally biased stretch (low complexity) spans 563–579 (GSSPSIRPSQGSQGSGS). The interval 578–703 (GSPEEKEVVE…QRKPDRRKRS (126 aa)) is interaction with BRCA1. The segment covering 580–596 (PEEKEVVEAVDSREKPG) has biased composition (basic and acidic residues). A coiled-coil region spans residues 612-643 (KELLALLKCVEAEIANYEACLKEEVEKRKKFK). Positions 624–668 (EIANYEACLKEEVEKRKKFKIDDQRRTHNYDEFICTFISMLAQEG) are interaction with YY1. The ULD domain occupies 652 to 680 (NYDEFICTFISMLAQEGMLANLVEQNISV). Residues 681–683 (RRR) are interaction with nucleosomal DNA forming a DNA clamp with ASXL1. The short motif at 681-704 (RRRQGVSIGRLHKQRKPDRRKRSR) is the Classical bipartite Nuclear localization signal (NLS) element. Residues 685–711 (GVSIGRLHKQRKPDRRKRSRPYKAKRQ) are disordered. Positions 695 to 711 (RKPDRRKRSRPYKAKRQ) are positively charged C-terminal extension (CTE). Positions 699 to 704 (RRKRSR) match the Nuclear localization signal motif. The Non-classical PY-nuclear localization signal (PY-NLS) motif lies at 699–706 (RRKRSRPY).

This sequence belongs to the peptidase C12 family. BAP1 subfamily. As to quaternary structure, core component of the polycomb repressive deubiquitinase (PR-DUB) complex, at least composed of BAP1, one of ASXL1, ASXL2 or (probably) ASXL3, and one of MBD5 or MBD6. The PR-DUB core associates with a number of accessory proteins, including FOXK1, FOXK2, KDM1B, HCFC1, YY1 and OGT; KDM1B specifically associates with ASXL2 PR-DUB complexes. The BAP1 deubiquitinase activity is not required for PR-DUB assembly. Homodimerizes (via coiled-coil hinge-region between the UCH and ULD domains) to mediate assembly of 2 copies of the BAP1-ASXL heterodimer into a bisymmetric tetramer; dimerization enhances association with nucleosomes. The PR-DUB complex associates with nucleosomes to mediate deubiquitination of 'lys-120' of histone H2AK118ub1 substrates; the association requires the positively charged C-terminal tail of BAP1. Interacts (via ULD domain) with ASXL1 (via DEUBAD domain); the interaction is direct and forms a ubiquitin binding cleft. The interaction with ASXL1 stabilizes BAP1 but is not required for nucleosome binding. Associates (via C-terminus) with nucleosome and chromatosome complexes through direct interaction with DNA and the histone3/4 dimer; this association displaces the histone-2A C-terminal tail, extending and orienting the H2AK118ub1 substrate towards the BAP1 deubiquitinase active site. Also interacts (via arginine finger) directly with the histone H2A-H2B acidic patch; this interaction is not critical for nucleosome-chromatosome association but may play a role in orienting the H2AK118ub1 substrate towards the PR-DUB complex active site. Interacts with BRCA1 (via the RING finger). Interacts (via HBM-like motif) with HCFC1. Interacts (via a C-terminal region overlapping the ULD domain) with YY1; the interaction is direct and requires the interaction with HCFC1. Interacts (when phosphorylated at Thr-475) with FOXK1. Interacts (when phosphorylated at Thr-475) with FOXK2; leading to recruitment of the PR-DUB complex and repression of FOXK2 target genes. Interacts (via non-classical PY-NLS) with TNPO1/transportin-1 (via HEAT repeats 8-12); the interaction is direct, mediates BAP1 nuclear localization and disrupts BAP1 homodimerization. Interacts (via C-terminus) with KPNA1/importin alpha5 and KPNA2/importin alpha1; these interactions can contribute to BAP1 nuclear localization but are less important than the interaction with TNPO1/transportin-1. The interaction with TNPO1/transportin-1 disrupts homodimerization and blocks ubiquitination by UBE2O. Post-translationally, ubiquitinated: monoubiquitinated at multiple sites within its nuclear localization signal (NLS) BY UBE2O, leading to cytoplasmic retention. Able to mediate autodeubiquitination via intramolecular interactions to counteract cytoplasmic retention. Monoubiquitinated on at least 4 sites near or within its PY-NLS.

The protein resides in the cytoplasm. It localises to the nucleus. The protein localises to the chromosome. The catalysed reaction is Thiol-dependent hydrolysis of ester, thioester, amide, peptide and isopeptide bonds formed by the C-terminal Gly of ubiquitin (a 76-residue protein attached to proteins as an intracellular targeting signal).. Functionally, deubiquitinating enzyme that plays a key role in chromatin by mediating deubiquitination of histone H2A and HCFC1. Catalytic component of the polycomb repressive deubiquitinase (PR-DUB) complex, a complex that specifically mediates deubiquitination of histone H2A monoubiquitinated at 'Lys-120' (H2AK119ub1). Does not deubiquitinate monoubiquitinated histone H2B. The PR-DUB complex is an epigenetic regulator of gene expression and acts as a transcriptional coactivator, affecting genes involved in development, cell communication, signaling, cell proliferation and cell viability. Antagonizes PRC1 mediated H2AK119ub1 monoubiquitination. As part of the PR-DUB complex, associates with chromatin enriched in histone marks H3K4me1, H3K4me3, and H3K27Ac, but not in H3K27me3. Acts as a regulator of cell growth by mediating deubiquitination of HCFC1 N-terminal and C-terminal chains, with some specificity toward 'Lys-48'-linked polyubiquitin chains compared to 'Lys-63'-linked polyubiquitin chains. Deubiquitination of HCFC1 does not lead to increase stability of HCFC1. Interferes with the BRCA1 and BARD1 heterodimer activity by inhibiting their ability to mediate ubiquitination and autoubiquitination. It however does not mediate deubiquitination of BRCA1 and BARD1. Able to mediate autodeubiquitination via intramolecular interactions to counteract monoubiquitination at the nuclear localization signal (NLS), thereby protecting it from cytoplasmic sequestration. Negatively regulates epithelial-mesenchymal transition (EMT) of trophoblast stem cells during placental development by regulating genes involved in epithelial cell integrity, cell adhesion and cytoskeletal organization. The protein is Ubiquitin carboxyl-terminal hydrolase BAP1 (BAP1) of Bos taurus (Bovine).